The chain runs to 510 residues: GMP synthase [glutamine-hydrolyzing] (510 aa).

The 191-residue stretch at 5–195 (LVFIIDFGGQ…LFNICELKGD (191 aa)) folds into the Glutamine amidotransferase type-1 domain. Cysteine 82 acts as the Nucleophile in catalysis. Residues histidine 169 and glutamate 171 contribute to the active site. Positions 196–385 (WSVTSFAEEK…LGIPHKLVWR (190 aa)) constitute a GMPS ATP-PPase domain. 223–229 (SGGVDSS) provides a ligand contact to ATP.

Homodimer.

The catalysed reaction is XMP + L-glutamine + ATP + H2O = GMP + L-glutamate + AMP + diphosphate + 2 H(+). Its pathway is purine metabolism; GMP biosynthesis; GMP from XMP (L-Gln route): step 1/1. Catalyzes the synthesis of GMP from XMP. This Clostridium tetani (strain Massachusetts / E88) protein is GMP synthase [glutamine-hydrolyzing].